Reading from the N-terminus, the 1235-residue chain is ATP-dependent DNA helicase mph1 (1235 aa).

Disordered stretches follow at residues 20-78 (LTQA…YRIH) and 96-148 (DEMP…VHSP). The segment covering 61 to 72 (SRSDNDEADEKK) has biased composition (basic and acidic residues). Residues 137 to 148 (AKTQKQNIVHSP) are compositionally biased toward polar residues. One can recognise a Helicase ATP-binding domain in the interval 272–440 (IVHKGLFNNL…EVIDNLEIAE (169 aa)). 285–292 (LPTGLGKT) contributes to the ATP binding site. A DEAH box motif is present at residues 388 to 391 (DEAH). The 177-residue stretch at 608–784 (KLTYLCDTVL…GSRFTFRHDL (177 aa)) folds into the Helicase C-terminal domain. 3 disordered regions span residues 808–827 (NTQD…RKKL), 944–1117 (SRLQ…PPLM), and 1144–1235 (TGAK…DSDE). Residues 947–958 (QRPEDRDNKPYG) show a composition bias toward basic and acidic residues. Residues 1015–1027 (VAPKKAKPRRGRA) show a composition bias toward basic residues. A compositionally biased stretch (basic and acidic residues) spans 1065 to 1074 (PGERVDRTSD). Over residues 1075–1085 (MEELEADDDSD) the composition is skewed to acidic residues. Composition is skewed to polar residues over residues 1095-1114 (PTQT…SSSP) and 1146-1159 (AKNS…MTQE). Residues 1160–1170 (SSDGGDSMDSD) show a composition bias toward low complexity. Residues 1194 to 1209 (PSSSVFSSGQKATPNM) are compositionally biased toward polar residues.

It belongs to the DEAD box helicase family. DEAH subfamily. FANCM sub-subfamily. As to quaternary structure, interacts with the MHF histone-fold complex to form the FANCM-MHF complex.

The protein resides in the nucleus. The catalysed reaction is ATP + H2O = ADP + phosphate + H(+). In terms of biological role, ATP-dependent DNA helicase involved in DNA damage repair by homologous recombination and in genome maintenance. Capable of unwinding D-loops. Plays a role in limiting crossover recombinants during mitotic DNA double-strand break (DSB) repair. Component of a FANCM-MHF complex which promotes gene conversion at blocked replication forks, probably by reversal of the stalled fork. This is ATP-dependent DNA helicase mph1 from Sclerotinia sclerotiorum (strain ATCC 18683 / 1980 / Ss-1) (White mold).